We begin with the raw amino-acid sequence, 383 residues long: Plant intracellular Ras-group-related LRR protein 8 (383 aa).

10 LRR repeats span residues 56–79 (RQNI…SINL), 80–102 (ASIS…LVAR), 104–126 (LNLW…IGCL), 127–149 (SKLK…IEDC), 151–173 (SLEE…GFEL), 174–197 (TNLT…SYLT), 199–219 (LRVL…LENL), 221–244 (NLQV…VGLL), 245–268 (ISLV…GCLR), and 270–290 (IQKL…VVEQ). Residues 291–298 (GLEALKQY) carry the GVYW; degenerate motif.

It belongs to the SHOC2 family. In terms of tissue distribution, widely expressed except flowers.

Functionally, leucine-rich repeat protein that likely mediates protein interactions, possibly in the context of signal transduction. This chain is Plant intracellular Ras-group-related LRR protein 8 (PIRL8), found in Arabidopsis thaliana (Mouse-ear cress).